The following is a 1424-amino-acid chain: ABC multidrug transporter H (1424 aa).

The tract at residues 1 to 49 (MEDQGHLPSEPRALFDRRDDTDSTNTALDETDLSRTPLQDTSHTPHAED) is disordered. Over residues 23–42 (STNTALDETDLSRTPLQDTS) the composition is skewed to polar residues. Asparagine 79 and asparagine 275 each carry an N-linked (GlcNAc...) asparagine glycan. The region spanning 96-351 (LSQFNIPQHI…MEEQGFVCRE (256 aa)) is the ABC transporter 1 domain. 7 consecutive transmembrane segments (helical) span residues 488-508 (GLFIKSGALFFSLLYNSLLAM), 520-540 (VLIKHKYFAFFHPAAFCIAQI), 544-564 (IPVLLFQISMFAVVVYFMVGL), 569-589 (GAFFSYWIIIFVATMVMTALF), 605-625 (VSGFLISALIMYCGYLEPYHA), 629-649 (WFIWIYWINPLAYAFDALLSI), and 710-730 (NFGILWAWWALFVAVTIIATS). Positions 760–782 (EEAQLNEKAGHKGTGTDSEAQSN) are disordered. 2 N-linked (GlcNAc...) asparagine glycosylation sites follow: asparagine 790 and asparagine 798. Residues 794–1037 (FTWKNLTYTV…VKDYFARYGA (244 aa)) form the ABC transporter 2 domain. 830 to 837 (GSSGAGKT) is an ATP binding site. Helical transmembrane passes span 1131-1151 (IALHIGSALFNGFSFWMIGDS), 1161-1181 (TIFNFIFVAPGVINQLQPLFI), 1200-1220 (VAFVTALIVSEFPYLCVCAVL), and 1240-1260 (AIFFIMLCYEFLYTGIGQFIA). A glycan (N-linked (GlcNAc...) asparagine) is linked at asparagine 1265. 2 helical membrane passes run 1268-1288 (FAALTNPLILGTLVSFCGVLV) and 1300-1320 (WIYWLNPFNYLMGSMLVFSVF). Residue asparagine 1338 is glycosylated (N-linked (GlcNAc...) asparagine). The chain crosses the membrane as a helical span at residues 1395–1415 (TAIVCIFVLSSYALVYALMKL).

Belongs to the ABC transporter superfamily. ABCG family. PDR (TC 3.A.1.205) subfamily.

It localises to the cell membrane. With respect to regulation, the efflux inhibitor FK506 impairs the transport activity. Functionally, ABC efflux transporter that is able to transport rhodamine 6G (R-6G), a known substrate for many ABC transporters, but seems not to transport azoles. This chain is ABC multidrug transporter H, found in Aspergillus fumigatus (strain ATCC MYA-4609 / CBS 101355 / FGSC A1100 / Af293) (Neosartorya fumigata).